Reading from the N-terminus, the 224-residue chain is ATP-dependent dethiobiotin synthetase BioD (224 aa).

T18 contributes to the Mg(2+) binding site. K39 is a catalytic residue. Substrate is bound at residue S43. Positions 56 and 117 each coordinate Mg(2+). Residues D56, 117 to 120 (EGVG), and 177 to 178 (NE) each bind ATP.

The protein belongs to the dethiobiotin synthetase family. As to quaternary structure, homodimer. It depends on Mg(2+) as a cofactor.

The protein localises to the cytoplasm. It catalyses the reaction (7R,8S)-7,8-diammoniononanoate + CO2 + ATP = (4R,5S)-dethiobiotin + ADP + phosphate + 3 H(+). It functions in the pathway cofactor biosynthesis; biotin biosynthesis; biotin from 7,8-diaminononanoate: step 1/2. Catalyzes a mechanistically unusual reaction, the ATP-dependent insertion of CO2 between the N7 and N8 nitrogen atoms of 7,8-diaminopelargonic acid (DAPA, also called 7,8-diammoniononanoate) to form a ureido ring. The sequence is that of ATP-dependent dethiobiotin synthetase BioD from Xanthomonas oryzae pv. oryzae (strain MAFF 311018).